The chain runs to 392 residues: Speckle-type POZ protein-like (392 aa).

In terms of domain architecture, MATH spans Lys31–Val161. Residues Thr200–Asp267 form the BTB domain.

This sequence belongs to the Tdpoz family. Homodimer. Heterodimer with SPOP. Component of cullin-RING-based BCR (BTB-CUL3-RBX1) E3 ubiquitin-protein ligase complexes containing homodimeric SPOPL or the heterodimer formed by SPOP and SPOPL. Interacts with CUL3 and MACROH2A1.

The protein resides in the nucleus. The protein operates within protein modification; protein ubiquitination. In terms of biological role, component of a cullin-RING-based BCR (BTB-CUL3-RBX1) E3 ubiquitin-protein ligase complex that mediates the ubiquitination and subsequent proteasomal degradation of target proteins, but with relatively low efficiency. Cullin-RING-based BCR (BTB-CUL3-RBX1) E3 ubiquitin-protein ligase complexes containing homodimeric SPOPL or the heterodimer formed by SPOP and SPOPL are less efficient than ubiquitin ligase complexes containing only SPOP. May function to down-regulate the activity of cullin-RING-based BCR (BTB-CUL3-RBX1) E3 ubiquitin-protein ligase complexes that contain SPOP. The sequence is that of Speckle-type POZ protein-like (SPOPL) from Homo sapiens (Human).